A 276-amino-acid polypeptide reads, in one-letter code: NH(3)-dependent NAD(+) synthetase (276 aa).

ATP is bound at residue 43–50 (GISGGVDS). Residue aspartate 49 coordinates Mg(2+). A deamido-NAD(+)-binding site is contributed by arginine 146. Threonine 166 contacts ATP. Glutamate 171 is a binding site for Mg(2+). Positions 179 and 186 each coordinate deamido-NAD(+). Lysine 195 and threonine 217 together coordinate ATP. 266–267 (HK) is a binding site for deamido-NAD(+).

It belongs to the NAD synthetase family. In terms of assembly, homodimer.

It carries out the reaction deamido-NAD(+) + NH4(+) + ATP = AMP + diphosphate + NAD(+) + H(+). The protein operates within cofactor biosynthesis; NAD(+) biosynthesis; NAD(+) from deamido-NAD(+) (ammonia route): step 1/1. Catalyzes the ATP-dependent amidation of deamido-NAD to form NAD. Uses ammonia as a nitrogen source. The chain is NH(3)-dependent NAD(+) synthetase from Shewanella baltica (strain OS185).